Reading from the N-terminus, the 568-residue chain is MAGUK p55 subfamily member 3 (568 aa).

2 L27 domains span residues 6–60 (EDSG…ERQS) and 61–118 (PTPV…FDPV). Residues 137–218 (IVRLVKNKEP…SITLKIIPAT (82 aa)) enclose the PDZ domain. In terms of domain architecture, SH3 spans 226-296 (DSKVFMRALF…PSKQFQERRL (71 aa)). Ser307 is modified (phosphoserine). Residues 385–568 (PRLVVLIGSL…QEPAASSELS (184 aa)) form the Guanylate kinase-like domain.

Belongs to the MAGUK family. In terms of assembly, interacts with HTR2C; this interaction stabilizes the receptor at the plasma membrane and prevents the desensitization of the HTR2C receptor-mediated calcium response. Interacts with HTR2A. Interacts with HTR4. Interacts (via PDZ domain) with CADM1 (via C-terminus)Interacts (via PDZ domain) with CADM1; this interaction connects CADM1 with DLG1. Interacts (via Guanylate kinase-like domain) with PALS1. Interacts with DLG1 (via N-terminus); this interaction connects CADM1 with DLG1 and links CADM1 with the regulatory subunit of phosphoinositide-3-kinase (PI3K) by forming a multiprotein complex and participates in cell spreading. Expressed in brain, skeletal muscle, testis, kidney, and lung.

The protein localises to the apical cell membrane. The protein resides in the cell membrane. It is found in the cell junction. Its subcellular location is the adherens junction. Functionally, participates in cell spreading through the phosphoinositide-3-kinase (PI3K) pathway by connecting CADM1 to DLG1 and the regulatory subunit of phosphoinositide-3-kinase (PI3K). Stabilizes HTR2C at the plasma membrane and prevents its desensitization. May participates in the maintenance of adherens junctions. In Mus musculus (Mouse), this protein is MAGUK p55 subfamily member 3.